A 212-amino-acid chain; its full sequence is Acyl-homoserine-lactone synthase (212 aa).

This sequence belongs to the autoinducer synthase family.

It catalyses the reaction a fatty acyl-[ACP] + S-adenosyl-L-methionine = an N-acyl-L-homoserine lactone + S-methyl-5'-thioadenosine + holo-[ACP] + H(+). Required for the synthesis of autoinducer molecules which bind to RaiR and that are involved in the restriction of nodule number. The protein is Acyl-homoserine-lactone synthase (raiI) of Rhizobium etli.